We begin with the raw amino-acid sequence, 67 residues long: Protein DsrB (67 aa).

The protein belongs to the DsrB family.

The polypeptide is Protein DsrB (Pectobacterium carotovorum subsp. carotovorum (strain PC1)).